The chain runs to 334 residues: DNA polymerase beta (334 aa).

K(+) is bound by residues Lys-60, Leu-62, and Val-65. Na(+) contacts are provided by Lys-60, Leu-62, and Val-65. The active-site Nucleophile; Schiff-base intermediate with DNA; for 5'-dRP lyase activity is the Lys-72. An Omega-N-methylarginine; by PRMT6 modification is found at Arg-83. Thr-101, Val-103, and Ile-106 together coordinate K(+). Residues Thr-101, Val-103, and Ile-106 each contribute to the Na(+) site. Residue Arg-149 participates in a 2'-deoxyribonucleoside 5'-triphosphate binding. Arg-152 carries the post-translational modification Omega-N-methylarginine; by PRMT6. Residues Ser-180, Arg-183, Gly-189, and Asp-190 each coordinate a 2'-deoxyribonucleoside 5'-triphosphate. Positions 183-192 (RGAESSGDMD) are DNA-binding. Residues Asp-190, Asp-192, and Asp-255 each coordinate Mg(2+).

It belongs to the DNA polymerase type-X family. As to quaternary structure, monomer. It depends on Mg(2+) as a cofactor. Methylation by PRMT6 stimulates the polymerase activity by enhancing DNA binding and processivity. In terms of processing, ubiquitinated: monoubiquitinated by huwe1/arf-bp1. Monoubiquitinated protein is then the target of stub1/chip, which catalyzes polyubiquitination from monoubiquitin, leading to degradation by the proteasome. usp47 mediates the deubiquitination of monoubiquitinated protein, preventing polyubiquitination by STUB1/CHIP and its subsequent degradation.

The protein resides in the nucleus. The protein localises to the cytoplasm. The catalysed reaction is DNA(n) + a 2'-deoxyribonucleoside 5'-triphosphate = DNA(n+1) + diphosphate. The enzyme catalyses a 5'-end 2'-deoxyribose-2'-deoxyribonucleotide-DNA = (2E,4S)-4-hydroxypenten-2-al-5-phosphate + a 5'-end 5'-phospho-2'-deoxyribonucleoside-DNA + H(+). It carries out the reaction 2'-deoxyribonucleotide-(2'-deoxyribose 5'-phosphate)-2'-deoxyribonucleotide-DNA = a 3'-end 2'-deoxyribonucleotide-(2,3-dehydro-2,3-deoxyribose 5'-phosphate)-DNA + a 5'-end 5'-phospho-2'-deoxyribonucleoside-DNA + H(+). Repair polymerase that plays a key role in base-excision repair. During this process, the damaged base is excised by specific DNA glycosylases, the DNA backbone is nicked at the abasic site by an apurinic/apyrimidic (AP) endonuclease, and POLB removes 5'-deoxyribose-phosphate from the preincised AP site acting as a 5'-deoxyribose-phosphate lyase (5'-dRP lyase); through its DNA polymerase activity, it adds one nucleotide to the 3' end of the arising single-nucleotide gap. Conducts 'gap-filling' DNA synthesis in a stepwise distributive fashion rather than in a processive fashion as for other DNA polymerases. It is also able to cleave sugar-phosphate bonds 3' to an intact AP site, acting as an AP lyase. The chain is DNA polymerase beta (polb) from Xenopus laevis (African clawed frog).